The sequence spans 350 residues: Induced myeloid leukemia cell differentiation protein Mcl-1 homolog (350 aa).

Glycyl lysine isopeptide (Lys-Gly) (interchain with G-Cter in ubiquitin) cross-links involve residues lysine 5 and lysine 40. The PEST-like stretch occupies residues 104–175 (CASPPEEMEG…PAEEEEDELF (72 aa)). Serine 121 is subject to Phosphoserine. A Glycyl lysine isopeptide (Lys-Gly) (interchain with G-Cter in ubiquitin) cross-link involves residue lysine 136. The disordered stretch occupies residues 148-170 (GEASSGPGTDGSLPSTPPPAEEE). Residue serine 159 is modified to Phosphoserine; by GSK3-alpha and GSK3-beta. Serine 162 carries the phosphoserine modification. Threonine 163 carries the post-translational modification Phosphothreonine; by MAPK. Glycyl lysine isopeptide (Lys-Gly) (interchain with G-Cter in ubiquitin) cross-links involve residues lysine 194 and lysine 197. The BH3 signature appears at 209 to 223 (ALETLRRVGDGVQRN). Positions 252–272 (HVFSDGVTNWGRIVTLISFGA) match the BH1 motif. The BH2 signature appears at 304 to 319 (DWLVKQRGWDGFVEFF). A helical transmembrane segment spans residues 328–348 (IRNVLLAFAGVAGVGAGLAYL).

This sequence belongs to the Bcl-2 family. As to quaternary structure, interacts with HIF3A (via C-terminus domain). Interacts with BOK, BIK, BAX, BAK1, and TPT1. Interacts with unphosphorylated BAD. Interacts with BMF, BBC3 and PMAIP1. Interacts with BOP. Interacts with BCL2L11; may sequester BCL2L11 to prevent its pro-apoptotic activity. Interacts with GIMAP5 and HSPA8/HSC70; the interaction between HSPA8 and MCL1 is impaired in the absence of GIMAP5. Cleaved by CASP3 during apoptosis, yielding a pro-apoptotic C-terminal fragment. In terms of processing, rapidly degraded in the absence of phosphorylation in the PEST region. Post-translationally, phosphorylated on Ser-159, by GSK3, in response to IL3/interleukin-3 withdrawal. Phosphorylation at Ser-159 induces ubiquitination and proteasomal degradation, abrogating the anti-apoptotic activity. Treatment with taxol or okadaic acid induces phosphorylation on additional sites. Ubiquitinated. Ubiquitination is induced by phosphorylation at Ser-159. Deubiquitinated by USP20; leading to increased stability.

The protein localises to the membrane. It localises to the cytoplasm. The protein resides in the mitochondrion. Its subcellular location is the nucleus. It is found in the nucleoplasm. In terms of biological role, involved in the regulation of apoptosis versus cell survival, and in the maintenance of viability but not of proliferation. Mediates its effects by interactions with a number of other regulators of apoptosis. The sequence is that of Induced myeloid leukemia cell differentiation protein Mcl-1 homolog (MCL1) from Felis catus (Cat).